We begin with the raw amino-acid sequence, 155 residues long: Ribosome maturation factor RimP (155 aa).

It belongs to the RimP family.

It is found in the cytoplasm. Required for maturation of 30S ribosomal subunits. The protein is Ribosome maturation factor RimP of Lachnoclostridium phytofermentans (strain ATCC 700394 / DSM 18823 / ISDg) (Clostridium phytofermentans).